The sequence spans 307 residues: Transcription initiation factor IIB (307 aa).

2 consecutive repeat copies span residues 123 to 206 (NELE…LREL) and 217 to 298 (DYVT…ELTQ).

Belongs to the TFIIB family.

Stabilizes TBP binding to an archaeal box-A promoter. Also responsible for recruiting RNA polymerase II to the pre-initiation complex (DNA-TBP-TFIIB). The protein is Transcription initiation factor IIB of Sulfolobus acidocaldarius (strain ATCC 33909 / DSM 639 / JCM 8929 / NBRC 15157 / NCIMB 11770).